A 259-amino-acid chain; its full sequence is MLMVISPAKTLDYDTPPITERFTQPQYLDHSQQLIELLRRYSPAQISELMHLSDKLAALNVARYGSWTPAFTPSNAKQALLAFKGDVYTGLNADDFTEDDLLFAQKHLRMLSGLYGLLRPLDLMQPYRLEMGTKLTNPRGKDLYAFWGERISDWLNEALADQGDDVLLNLASNEYFSAVKRNALNARIINVDFKDMKNGQYKIISFYAKKARGLMARWIIKERISTPDQLSAFDYEGYRYSANDSSADHLVFLRDASDQ.

It belongs to the UPF0246 family.

This is UPF0246 protein PST_1170 from Stutzerimonas stutzeri (strain A1501) (Pseudomonas stutzeri).